A 66-amino-acid polypeptide reads, in one-letter code: Large ribosomal subunit protein bL31 (66 aa).

Cys-16, Cys-18, Cys-36, and Cys-39 together coordinate Zn(2+).

The protein belongs to the bacterial ribosomal protein bL31 family. Type A subfamily. As to quaternary structure, part of the 50S ribosomal subunit. Zn(2+) serves as cofactor.

Its function is as follows. Binds the 23S rRNA. The sequence is that of Large ribosomal subunit protein bL31 from Pelobacter propionicus (strain DSM 2379 / NBRC 103807 / OttBd1).